Here is a 243-residue protein sequence, read N- to C-terminus: MSDNETKETQVAEETQNTVATESNNEDRKGRRGQRGEGRRGERRNRREENHGDELLDRVVTINRVSKTHKGGRTFSFAALVVVGDGNGTVGVGYGKSREVPAAIAKGQLDAKKHMFSVPRVRGTITHPVQGHDAAGTVLLRPAAPGTGVIAGGSVRAVMECAGITDVLTKSMGSATAVNVVRATVDALKQLEEPEEIAARRGLALDEVAPDALLRARAAGIAEARKAREEAAAAKAAEEKDGE.

Over residues 1 to 10 the composition is skewed to basic and acidic residues; sequence MSDNETKETQ. The segment at 1–50 is disordered; sequence MSDNETKETQVAEETQNTVATESNNEDRKGRRGQRGEGRRGERRNRREEN. Residues 12–23 show a composition bias toward polar residues; sequence AEETQNTVATES. Over residues 25–50 the composition is skewed to basic and acidic residues; that stretch reads NEDRKGRRGQRGEGRRGERRNRREEN. One can recognise an S5 DRBM domain in the interval 55–118; it reads LLDRVVTINR…LDAKKHMFSV (64 aa).

This sequence belongs to the universal ribosomal protein uS5 family. In terms of assembly, part of the 30S ribosomal subunit. Contacts proteins S4 and S8.

With S4 and S12 plays an important role in translational accuracy. In terms of biological role, located at the back of the 30S subunit body where it stabilizes the conformation of the head with respect to the body. The sequence is that of Small ribosomal subunit protein uS5 from Bifidobacterium longum (strain DJO10A).